Reading from the N-terminus, the 379-residue chain is UDP-4-amino-4-deoxy-L-arabinose--oxoglutarate aminotransferase (379 aa).

Lys-182 bears the N6-(pyridoxal phosphate)lysine mark.

This sequence belongs to the DegT/DnrJ/EryC1 family. ArnB subfamily. As to quaternary structure, homodimer. It depends on pyridoxal 5'-phosphate as a cofactor.

It catalyses the reaction UDP-4-amino-4-deoxy-beta-L-arabinose + 2-oxoglutarate = UDP-beta-L-threo-pentopyranos-4-ulose + L-glutamate. Its pathway is nucleotide-sugar biosynthesis; UDP-4-deoxy-4-formamido-beta-L-arabinose biosynthesis; UDP-4-deoxy-4-formamido-beta-L-arabinose from UDP-alpha-D-glucuronate: step 2/3. It functions in the pathway bacterial outer membrane biogenesis; lipopolysaccharide biosynthesis. Its function is as follows. Catalyzes the conversion of UDP-4-keto-arabinose (UDP-Ara4O) to UDP-4-amino-4-deoxy-L-arabinose (UDP-L-Ara4N). The modified arabinose is attached to lipid A and is required for resistance to polymyxin and cationic antimicrobial peptides. This chain is UDP-4-amino-4-deoxy-L-arabinose--oxoglutarate aminotransferase, found in Escherichia coli O7:K1 (strain IAI39 / ExPEC).